Reading from the N-terminus, the 29-residue chain is Small toxic protein TisB (29 aa).

A helical transmembrane segment spans residues 6–28; sequence IAILILKLIVAALQLLDAVLKYL.

The protein localises to the cell inner membrane. In terms of biological role, toxic component of a type I toxin-antitoxin (TA) system. Overexpression causes cessation of growth, induces stress-response, a number of membrane protein genes, and leads to cell death. Inhibits ATP synthesis, ATP levels drop drastically quickly after induction. Part of the programmed response to DNA damage; damage leads to increased accumulation of the protein which slows or stops bacterial growth, probably allowing DNA repair before cells continue to grow. The polypeptide is Small toxic protein TisB (tisB) (Escherichia coli (strain K12)).